The sequence spans 400 residues: ATP-dependent rRNA helicase RRP3 (400 aa).

Residues 1-29 (MEFGDLRIDESLIKTCQEKGITRPTEVQR) carry the Q motif motif. Residues 32-202 (IPAVLGGGDV…SSILKRPKTI (171 aa)) form the Helicase ATP-binding domain. 45–52 (SQTGSGKT) provides a ligand contact to ATP. The DEAD box signature appears at 150–153 (DEAD). Residues 229–373 (ALVELLEMSQ…EFKMMKKNFG (145 aa)) enclose the Helicase C-terminal domain.

The protein belongs to the DEAD box helicase family. DDX47/RRP3 subfamily. As to quaternary structure, interacts with the SSU processome.

It is found in the nucleus. It catalyses the reaction ATP + H2O = ADP + phosphate + H(+). Functionally, ATP-dependent rRNA helicase required for pre-ribosomal RNA processing. Involved in the maturation of the 35S-pre-rRNA and to its cleavage to mature 18S rRNA. This is ATP-dependent rRNA helicase RRP3 from Encephalitozoon cuniculi (strain GB-M1) (Microsporidian parasite).